The chain runs to 86 residues: Putative membrane protein insertion efficiency factor (86 aa).

It belongs to the UPF0161 family.

Its subcellular location is the cell inner membrane. Its function is as follows. Could be involved in insertion of integral membrane proteins into the membrane. The sequence is that of Putative membrane protein insertion efficiency factor from Ruegeria sp. (strain TM1040) (Silicibacter sp.).